A 104-amino-acid polypeptide reads, in one-letter code: Large ribosomal subunit protein bL21 (104 aa).

It belongs to the bacterial ribosomal protein bL21 family. As to quaternary structure, part of the 50S ribosomal subunit. Contacts protein L20.

This protein binds to 23S rRNA in the presence of protein L20. The polypeptide is Large ribosomal subunit protein bL21 (Alkalilimnicola ehrlichii (strain ATCC BAA-1101 / DSM 17681 / MLHE-1)).